A 251-amino-acid polypeptide reads, in one-letter code: Chorismate mutase (251 aa).

Residues 1 to 251 (MSLVNEKLKL…EVDYLLARLL (251 aa)) enclose the Chorismate mutase domain. Arg74, Arg75, Asn134, Gly136, and Ser137 together coordinate L-tyrosine. Asn134, Gly136, and Ser137 together coordinate L-tryptophan.

As to quaternary structure, homodimer.

The protein localises to the cytoplasm. The enzyme catalyses chorismate = prephenate. It functions in the pathway metabolic intermediate biosynthesis; prephenate biosynthesis; prephenate from chorismate: step 1/1. With respect to regulation, each dimer has two allosteric binding sites that can bind the regulatory effectors tryptophan or tyrosine. Can bind either one tryptophan or one tyrosine, two tryptophan or two tyrosine or one tryptophan and one tyrosine, which differentially affect the catalytic activity. Activated by tryptophan and subject to feedback inhibition by tyrosine. In the presence of both tryptophan and tyrosine, the enzyme is in the activated state. In terms of biological role, catalyzes the Claisen rearrangement of chorismate to prephenate. Acts at the first branch point in the aromatic amino acid pathway where it steers biosynthesis towards phenylalanine and tyrosine, and away from tryptophan. This is Chorismate mutase from Schizosaccharomyces pombe (strain 972 / ATCC 24843) (Fission yeast).